The following is a 124-amino-acid chain: Acidic phospholipase A2 BA1 (124 aa).

Disulfide bonds link Cys26-Cys116, Cys28-Cys44, Cys43-Cys95, Cys49-Cys124, Cys50-Cys88, Cys57-Cys81, and Cys75-Cys86. Ca(2+) is bound by residues Tyr27, Gly29, and Gly31. His47 is a catalytic residue. Ca(2+) is bound at residue Asp48. Asp89 is a catalytic residue.

The protein belongs to the phospholipase A2 family. Group II subfamily. D49 sub-subfamily. The cofactor is Ca(2+). In terms of tissue distribution, expressed by the venom gland.

The protein localises to the secreted. The enzyme catalyses a 1,2-diacyl-sn-glycero-3-phosphocholine + H2O = a 1-acyl-sn-glycero-3-phosphocholine + a fatty acid + H(+). PLA2 catalyzes the calcium-dependent hydrolysis of the 2-acyl groups in 3-sn-phosphoglycerides. The sequence is that of Acidic phospholipase A2 BA1 from Gloydius halys (Chinese water mocassin).